Here is a 92-residue protein sequence, read N- to C-terminus: MGKRFSESAAKKAAGLARKRDQAHAKQRAQMEQLEAEEASKWEQGSRKENAKKLEEEQKRQEKARAKKERDALLTAEEEQLGKGGKGKRKMK.

Basic and acidic residues-rich tracts occupy residues 1 to 10 (MGKRFSESAA) and 38 to 72 (EASKWEQGSRKENAKKLEEEQKRQEKARAKKERDA). Positions 1-92 (MGKRFSESAA…KGGKGKRKMK (92 aa)) are disordered. Residues 17–80 (ARKRDQAHAK…DALLTAEEEQ (64 aa)) are a coiled coil.

The protein belongs to the CCDC124 family. Associates with translationally inactive ribosomes in the nonrotated state. LSO2 bridges the decoding sites of the small with the GTPase activating center (GAC) of the large subunit. This position allows accommodation of the DOM34-dependent ribosome recycling system, which splits LSO2-containing ribosomes.

It localises to the nucleus. The protein resides in the cytoplasm. Ribosome-binding protein involved in ribosome hibernation by associating with translationally inactive ribosomes. Required for translational recovery after starvation from stationary phase. May facilitate rapid translation reactivation by stabilizing the recycling-competent state of inactive ribosomes. The polypeptide is Protein LSO2 (Saccharomyces cerevisiae (strain ATCC 204508 / S288c) (Baker's yeast)).